The following is a 288-amino-acid chain: tRNA dimethylallyltransferase (288 aa).

17–24 (GPTASGKT) serves as a coordination point for ATP. Substrate is bound at residue 19–24 (TASGKT).

It belongs to the IPP transferase family. As to quaternary structure, monomer. It depends on Mg(2+) as a cofactor.

It carries out the reaction adenosine(37) in tRNA + dimethylallyl diphosphate = N(6)-dimethylallyladenosine(37) in tRNA + diphosphate. Catalyzes the transfer of a dimethylallyl group onto the adenine at position 37 in tRNAs that read codons beginning with uridine, leading to the formation of N6-(dimethylallyl)adenosine (i(6)A). The polypeptide is tRNA dimethylallyltransferase (Jannaschia sp. (strain CCS1)).